We begin with the raw amino-acid sequence, 96 residues long: Co-chaperonin GroES (96 aa).

The protein belongs to the GroES chaperonin family. Heptamer of 7 subunits arranged in a ring. Interacts with the chaperonin GroEL.

Its subcellular location is the cytoplasm. Its function is as follows. Together with the chaperonin GroEL, plays an essential role in assisting protein folding. The GroEL-GroES system forms a nano-cage that allows encapsulation of the non-native substrate proteins and provides a physical environment optimized to promote and accelerate protein folding. GroES binds to the apical surface of the GroEL ring, thereby capping the opening of the GroEL channel. This Methylobacterium radiotolerans (strain ATCC 27329 / DSM 1819 / JCM 2831 / NBRC 15690 / NCIMB 10815 / 0-1) protein is Co-chaperonin GroES.